The sequence spans 206 residues: Thiamine-phosphate synthase (206 aa).

4-amino-2-methyl-5-(diphosphooxymethyl)pyrimidine contacts are provided by residues 36–40 (QLRAK) and N68. Positions 69 and 88 each coordinate Mg(2+). Residue S105 participates in 4-amino-2-methyl-5-(diphosphooxymethyl)pyrimidine binding. 131–133 (TPT) is a 2-[(2R,5Z)-2-carboxy-4-methylthiazol-5(2H)-ylidene]ethyl phosphate binding site. K134 contacts 4-amino-2-methyl-5-(diphosphooxymethyl)pyrimidine. G162 is a binding site for 2-[(2R,5Z)-2-carboxy-4-methylthiazol-5(2H)-ylidene]ethyl phosphate.

The protein belongs to the thiamine-phosphate synthase family. It depends on Mg(2+) as a cofactor.

It catalyses the reaction 2-[(2R,5Z)-2-carboxy-4-methylthiazol-5(2H)-ylidene]ethyl phosphate + 4-amino-2-methyl-5-(diphosphooxymethyl)pyrimidine + 2 H(+) = thiamine phosphate + CO2 + diphosphate. The enzyme catalyses 2-(2-carboxy-4-methylthiazol-5-yl)ethyl phosphate + 4-amino-2-methyl-5-(diphosphooxymethyl)pyrimidine + 2 H(+) = thiamine phosphate + CO2 + diphosphate. The catalysed reaction is 4-methyl-5-(2-phosphooxyethyl)-thiazole + 4-amino-2-methyl-5-(diphosphooxymethyl)pyrimidine + H(+) = thiamine phosphate + diphosphate. It functions in the pathway cofactor biosynthesis; thiamine diphosphate biosynthesis; thiamine phosphate from 4-amino-2-methyl-5-diphosphomethylpyrimidine and 4-methyl-5-(2-phosphoethyl)-thiazole: step 1/1. In terms of biological role, condenses 4-methyl-5-(beta-hydroxyethyl)thiazole monophosphate (THZ-P) and 2-methyl-4-amino-5-hydroxymethyl pyrimidine pyrophosphate (HMP-PP) to form thiamine monophosphate (TMP). This Thermus thermophilus (strain ATCC BAA-163 / DSM 7039 / HB27) protein is Thiamine-phosphate synthase.